A 605-amino-acid polypeptide reads, in one-letter code: Membrane protein insertase YidC (605 aa).

The chain crosses the membrane as a helical span at residues 8–28 (MIIAIALSLAVLLGWNYFVAA). The segment covering 35-47 (RQQQAQTSASPSP) has biased composition (low complexity). The disordered stretch occupies residues 35–71 (RQQQAQTSASPSPKEGGPSAPVPGTLPGASGGNPQAA). 4 consecutive transmembrane segments (helical) span residues 377-397 (LFGN…LFFL), 451-471 (WPVV…FVTI), 496-516 (LFGL…WPIV), and 540-560 (FTFM…GLVI).

Belongs to the OXA1/ALB3/YidC family. Type 1 subfamily. As to quaternary structure, interacts with the Sec translocase complex via SecD. Specifically interacts with transmembrane segments of nascent integral membrane proteins during membrane integration.

It localises to the cell inner membrane. Required for the insertion and/or proper folding and/or complex formation of integral membrane proteins into the membrane. Involved in integration of membrane proteins that insert both dependently and independently of the Sec translocase complex, as well as at least some lipoproteins. Aids folding of multispanning membrane proteins. In Methylobacterium nodulans (strain LMG 21967 / CNCM I-2342 / ORS 2060), this protein is Membrane protein insertase YidC.